A 154-amino-acid chain; its full sequence is Transcriptional repressor NrdR (154 aa).

Residues 3–34 (CPFCGANDTKVIDSRLVAEGEQVRRRRECVAC) fold into a zinc finger. One can recognise an ATP-cone domain in the interval 49 to 139 (PRLIKQDGTR…VYRRFQDLDE (91 aa)).

This sequence belongs to the NrdR family. Requires Zn(2+) as cofactor.

Its function is as follows. Negatively regulates transcription of bacterial ribonucleotide reductase nrd genes and operons by binding to NrdR-boxes. The polypeptide is Transcriptional repressor NrdR (Pseudomonas putida (strain W619)).